The sequence spans 89 residues: Large ribosomal subunit protein bL31B (89 aa).

The protein belongs to the bacterial ribosomal protein bL31 family. Type B subfamily. In terms of assembly, part of the 50S ribosomal subunit.

The protein is Large ribosomal subunit protein bL31B of Actinobacillus pleuropneumoniae serotype 5b (strain L20).